A 364-amino-acid polypeptide reads, in one-letter code: Protein BRI1-5 ENHANCED 1 (364 aa).

Residues 1–11 (MVREEQEEDDN) are compositionally biased toward acidic residues. Residues 1 to 22 (MVREEQEEDDNNNNNNGGGERK) are disordered. Residues 44–49 (GGSGFV), R69, 98–99 (DL), Y202, K206, V232, and S244 each bind NADP(+). Catalysis depends on K206, which acts as the Proton donor.

It belongs to the NAD(P)-dependent epimerase/dehydratase family. Monomer. As to expression, mainly present in cell elongating-containing tissues. Strongly expressed in roots and flowers, also observed in petioles, stems, leaves and siliques.

It is found in the cytoplasm. It participates in plant hormone biosynthesis; brassinosteroid biosynthesis. Element of the brassinosteroid metabolic pathway that regulates typhasterol (TY), castasterone (CS) and brassinolide (BL) levels. Involved in the control of organ elongation. This is Protein BRI1-5 ENHANCED 1 from Arabidopsis thaliana (Mouse-ear cress).